Reading from the N-terminus, the 623-residue chain is uncharacterized protein (623 aa).

Residues 1 to 18 show a composition bias toward polar residues; the sequence is MSSRSGSADTFTQRSDSN. Disordered regions lie at residues 1–107, 132–181, 207–231, 298–349, 384–464, 533–553, and 568–623; these read MSSR…DPFT, LGSD…EIGA, SWNLNSRHKRRDSNDRTVQSRADTD, REET…ESDQ, RKSV…DRNV, SINDLQQGTSSSQNQAMPPET, and VESR…TKGD. Residues 25 to 34 show a composition bias toward basic and acidic residues; it reads ISLDDVRDNN. Residues 39–49 are compositionally biased toward low complexity; that stretch reads SSSGISTTGSS. The segment covering 132-144 has biased composition (polar residues); that stretch reads LGSDTARPTSNGG. Low complexity predominate over residues 165 to 177; it reads STSTWGPSGPTTP. Over residues 328 to 339 the composition is skewed to polar residues; the sequence is EKSTFSRISEQP. Residues 400-417 show a composition bias toward low complexity; that stretch reads QTPTISTASSPIQPSSSP. A compositionally biased stretch (polar residues) spans 533 to 548; it reads SINDLQQGTSSSQNQA. The span at 604 to 614 shows a compositional bias: low complexity; it reads PSASPSTSRTR.

This is an uncharacterized protein from Emericella nidulans (strain FGSC A4 / ATCC 38163 / CBS 112.46 / NRRL 194 / M139) (Aspergillus nidulans).